Reading from the N-terminus, the 84-residue chain is ORF8b protein (84 aa).

Positions 1 to 82 (MCLKILVRYN…RDVLVVLNKR (82 aa)) constitute an SARS ORF8 Ig-like domain. A disulfide bridge links cysteine 22 with cysteine 40.

It is found in the host cytoplasm. The protein localises to the host nucleus. In terms of biological role, non-structural protein which is dispensable for virus replication in cell culture. This is ORF8b protein from Severe acute respiratory syndrome coronavirus (SARS-CoV).